A 219-amino-acid chain; its full sequence is Orotate phosphoribosyltransferase (219 aa).

Lys-26 lines the 5-phospho-alpha-D-ribose 1-diphosphate pocket. Position 34–35 (34–35) interacts with orotate; the sequence is FF. Residues 72–73, Arg-98, Lys-99, Lys-102, His-104, and 124–132 contribute to the 5-phospho-alpha-D-ribose 1-diphosphate site; these read YK and DDVITAGTA. The orotate site is built by Thr-128 and Arg-156.

It belongs to the purine/pyrimidine phosphoribosyltransferase family. PyrE subfamily. As to quaternary structure, homodimer. Mg(2+) serves as cofactor.

The enzyme catalyses orotidine 5'-phosphate + diphosphate = orotate + 5-phospho-alpha-D-ribose 1-diphosphate. It functions in the pathway pyrimidine metabolism; UMP biosynthesis via de novo pathway; UMP from orotate: step 1/2. Functionally, catalyzes the transfer of a ribosyl phosphate group from 5-phosphoribose 1-diphosphate to orotate, leading to the formation of orotidine monophosphate (OMP). The sequence is that of Orotate phosphoribosyltransferase from Xylella fastidiosa (strain Temecula1 / ATCC 700964).